We begin with the raw amino-acid sequence, 278 residues long: uncharacterized protein (278 aa).

This sequence belongs to the manganese catalase family.

This is an uncharacterized protein from Bacillus subtilis (strain 168).